Consider the following 384-residue polypeptide: MRSLSILGSTGSIGLSTLDVVRQHPEQFTITGLAEGHDVGMLVKQIREFNPRLVSVRNADAAAELASLLGNEKPEIFYGIEGAATVAAADGADMVVSAIVGAAGLVPTISAIKAGKNIALANKETMVVAGRLVTDLARQHKVTIIPVDSEHSAIYQSLLGHRHEDVLRLILTASGGPFLNTSAEELREVTLEQALKHPKWTMGAKITIDSATLMNKGLEVIEAHWLFDMPAHKIGVVVHPQSIIHSMVEYIDGCVMAQLGMPDMRAPIAYAIAYPERCPSGIERLDLPKIGSLSFQEPDPGRFPCLRLAYESLEAGRTCPAVLNAANEIAVAAFLDKRIGFTDIADTVDKTMQAHEAYTPVSLEEYLEADRWAREMAKGLVERA.

NADPH contacts are provided by Thr10, Gly11, Ser12, Ile13, Gly36, and Asn122. Lys123 is a binding site for 1-deoxy-D-xylulose 5-phosphate. Glu124 serves as a coordination point for NADPH. Residue Asp148 coordinates Mn(2+). 1-deoxy-D-xylulose 5-phosphate-binding residues include Ser149, Glu150, Ser174, and His197. Glu150 lines the Mn(2+) pocket. Gly203 is an NADPH binding site. 1-deoxy-D-xylulose 5-phosphate is bound by residues Ser210, Asn215, Lys216, and Glu219. Glu219 provides a ligand contact to Mn(2+).

Belongs to the DXR family. Mg(2+) is required as a cofactor. The cofactor is Mn(2+).

It catalyses the reaction 2-C-methyl-D-erythritol 4-phosphate + NADP(+) = 1-deoxy-D-xylulose 5-phosphate + NADPH + H(+). The protein operates within isoprenoid biosynthesis; isopentenyl diphosphate biosynthesis via DXP pathway; isopentenyl diphosphate from 1-deoxy-D-xylulose 5-phosphate: step 1/6. Its function is as follows. Catalyzes the NADPH-dependent rearrangement and reduction of 1-deoxy-D-xylulose-5-phosphate (DXP) to 2-C-methyl-D-erythritol 4-phosphate (MEP). The sequence is that of 1-deoxy-D-xylulose 5-phosphate reductoisomerase from Chlorobium phaeobacteroides (strain DSM 266 / SMG 266 / 2430).